Here is a 393-residue protein sequence, read N- to C-terminus: Serine/threonine protein kinase AFUB_078980 (393 aa).

The region spanning 61–390 is the Protein kinase domain; it reads YQVLSKLGFG…APELLTDPWL (330 aa). ATP contacts are provided by residues 67-75 and Lys90; that span reads LGFGANSTV. The Proton acceptor role is filled by Asp190.

The protein belongs to the protein kinase superfamily. CMGC Ser/Thr protein kinase family.

It catalyses the reaction L-seryl-[protein] + ATP = O-phospho-L-seryl-[protein] + ADP + H(+). The catalysed reaction is L-threonyl-[protein] + ATP = O-phospho-L-threonyl-[protein] + ADP + H(+). Functionally, serine/threonine protein kinase; part of the subtelomeric hrmA-associated cluster (HAC) containing genes that alter the hyphal surface (such as reduced total chitin or increased beta-glucan exposure) and perturb inter-hyphal interactions within the developing biofilms, resulting in a loss of vertically aligned polarized growing filaments. Consequently, this hypoxia-typic morphotype (called H-MORPH) with altered biofilm architecture leads to increased hypoxia fitness, increased host inflammation, rapid disease progression, and mortality in a murine model of invasive aspergillosis. This is Serine/threonine protein kinase AFUB_078980 from Aspergillus fumigatus (strain CBS 144.89 / FGSC A1163 / CEA10) (Neosartorya fumigata).